The chain runs to 139 residues: Tol-Pal system protein TolR (139 aa).

Residues 15–35 traverse the membrane as a helical segment; it reads IVPFLDVLLVLVLIFMATAPI.

It belongs to the ExbD/TolR family. In terms of assembly, the Tol-Pal system is composed of five core proteins: the inner membrane proteins TolA, TolQ and TolR, the periplasmic protein TolB and the outer membrane protein Pal. They form a network linking the inner and outer membranes and the peptidoglycan layer.

It is found in the cell inner membrane. Functionally, part of the Tol-Pal system, which plays a role in outer membrane invagination during cell division and is important for maintaining outer membrane integrity. The polypeptide is Tol-Pal system protein TolR (Haemophilus influenzae (strain ATCC 51907 / DSM 11121 / KW20 / Rd)).